Reading from the N-terminus, the 495-residue chain is Cysteine-rich secretory protein LCCL domain-containing 2 (495 aa).

Residues 1-22 form the signal peptide; it reads MSCLLNNMVLMGLALLVCGVQA. N27 is a glycosylation site (N-linked (GlcNAc...) asparagine). In terms of domain architecture, SCP spans 60 to 200; the sequence is LMLHNKLRGQ…ENAVYLVCNY (141 aa). LCCL domains lie at 282-377 and 383-486; these read MTQV…SSSF and TETA…QNGN. 4 disulfides stabilise this stretch: C288-C306, C310-C330, C389-C411, and C415-C438.

Binds to heparin, dermatan sulfate and chondroitin sulfate. In terms of tissue distribution, present in kidney renal tubules (at protein level).

Its subcellular location is the secreted. Its function is as follows. Promotes matrix assembly. The polypeptide is Cysteine-rich secretory protein LCCL domain-containing 2 (Crispld2) (Mus musculus (Mouse)).